We begin with the raw amino-acid sequence, 195 residues long: MTPMLLSAFWTYTLITALTPGPNNILALSAATAHGFRQSIRVLAGMSLGFLVVMLLCAGIAFSLAVIDPAIIHLLSWVGAAYILWLAWKIATSPAADEKVRPKPVGFWVSFGLQFVNVKIILYGITALSTFVLPQTQALNWVIGVSILLALIGTFGNVCWALAGHLFQRAFRHYGRQLNIILALLLVYCAVRIFY.

At 1–9 (MTPMLLSAF) the chain is on the periplasmic side. A helical transmembrane segment spans residues 10–32 (WTYTLITALTPGPNNILALSAAT). Topologically, residues 33 to 46 (AHGFRQSIRVLAGM) are cytoplasmic. A helical transmembrane segment spans residues 47 to 67 (SLGFLVVMLLCAGIAFSLAVI). The Periplasmic segment spans residues 68–69 (DP). A helical transmembrane segment spans residues 70–90 (AIIHLLSWVGAAYILWLAWKI). Topologically, residues 91–104 (ATSPAADEKVRPKP) are cytoplasmic. Residues 105 to 125 (VGFWVSFGLQFVNVKIILYGI) form a helical membrane-spanning segment. The Periplasmic segment spans residues 126–141 (TALSTFVLPQTQALNW). The chain crosses the membrane as a helical span at residues 142–162 (VIGVSILLALIGTFGNVCWAL). The Cytoplasmic segment spans residues 163–176 (AGHLFQRAFRHYGR). A helical transmembrane segment spans residues 177 to 194 (QLNIILALLLVYCAVRIF). Tyr195 is a topological domain (periplasmic).

Belongs to the Rht family.

It is found in the cell inner membrane. The enzyme catalyses O-acetyl-L-serine(in) = O-acetyl-L-serine(out). The catalysed reaction is L-cysteine(in) = L-cysteine(out). Functionally, exporter of O-acetylserine (OAS) and cysteine. This is Cysteine/O-acetylserine efflux protein (eamB) from Salmonella paratyphi A (strain ATCC 9150 / SARB42).